The following is a 48-amino-acid chain: Large ribosomal subunit protein bL33B (48 aa).

It belongs to the bacterial ribosomal protein bL33 family.

The chain is Large ribosomal subunit protein bL33B from Streptococcus thermophilus (strain CNRZ 1066).